The sequence spans 145 residues: Secreted RxLR effector protein PSE1 (145 aa).

The first 21 residues, 1-21 (MRLSSFIVVGAAVVNLLTSGS), serve as a signal peptide directing secretion. The RxLR-dEER signature appears at 53–73 (RLLRYHSNNNRGGDEDIAEER).

It belongs to the RxLR effector family.

It localises to the secreted. It is found in the host cell. Secreted effector that impairs both plant effector-triggered immunity and pathogen-associated molecular patterns (PAMP)-triggered immunity (PTI). Suppresses plant cell death as a part of the plant defense responses. Facilitates plant infection by altering the auxin content at the roots penetration points of the of the pathogen. The protein is Secreted RxLR effector protein PSE1 of Phytophthora nicotianae (Potato buckeye rot agent).